A 205-amino-acid polypeptide reads, in one-letter code: Endoribonuclease YbeY (205 aa).

Zn(2+) is bound by residues histidine 124, histidine 128, and histidine 134. Positions 162-205 are disordered; sequence GTAPVAPGGEAQVPNEALETSGKRQDHSLGEILPGGMSRRLAGS.

Belongs to the endoribonuclease YbeY family. It depends on Zn(2+) as a cofactor.

The protein localises to the cytoplasm. Single strand-specific metallo-endoribonuclease involved in late-stage 70S ribosome quality control and in maturation of the 3' terminus of the 16S rRNA. This is Endoribonuclease YbeY from Beijerinckia indica subsp. indica (strain ATCC 9039 / DSM 1715 / NCIMB 8712).